We begin with the raw amino-acid sequence, 165 residues long: Transmembrane protein 253 (165 aa).

A run of 3 helical transmembrane segments spans residues 31–51 (LVLAVSQLWLAVAVVPFAVSV), 60–80 (MTTALPLGPGILGLLTGIVTL), and 91–111 (LAGLLVLELSAEAFTLGGVLV). The interval 145–165 (EEVPELETGPTVASTAKRTNQ) is disordered. Residues 155 to 165 (TVASTAKRTNQ) are compositionally biased toward polar residues.

Its subcellular location is the membrane. The protein is Transmembrane protein 253 (TMEM253) of Bos taurus (Bovine).